Consider the following 117-residue polypeptide: uncharacterized protein (117 aa).

This is an uncharacterized protein from Encephalitozoon cuniculi (strain GB-M1) (Microsporidian parasite).